A 471-amino-acid polypeptide reads, in one-letter code: Adenosylhomocysteinase (471 aa).

Substrate-binding residues include Thr60, Asp135, and Glu196. 197-199 (TTT) is an NAD(+) binding site. Substrate is bound by residues Lys226 and Asp230. NAD(+) is bound by residues Asn231, 260–265 (GYGDVG), Glu283, Asn318, 339–341 (IGH), and Asn387.

The protein belongs to the adenosylhomocysteinase family. The cofactor is NAD(+).

It localises to the cytoplasm. The enzyme catalyses S-adenosyl-L-homocysteine + H2O = L-homocysteine + adenosine. It functions in the pathway amino-acid biosynthesis; L-homocysteine biosynthesis; L-homocysteine from S-adenosyl-L-homocysteine: step 1/1. Its function is as follows. May play a key role in the regulation of the intracellular concentration of adenosylhomocysteine. This is Adenosylhomocysteinase from Chlorobium limicola (strain DSM 245 / NBRC 103803 / 6330).